We begin with the raw amino-acid sequence, 182 residues long: Inner membrane-spanning protein YciB (182 aa).

The next 5 helical transmembrane spans lie at 20–42 (GGIYQATIVAMVATIVQILWVYY), 55–75 (LIMIMVFGSLTIFLHDSTFIL), 76–96 (LKPTALYWLFSGVLFVSAQFF), 123–143 (LNLAWSAFFFFMGFLNLYIAF), and 153–173 (FKLFGSTGLLIAFVIAQGFWM).

Belongs to the YciB family.

The protein resides in the cell inner membrane. In terms of biological role, plays a role in cell envelope biogenesis, maintenance of cell envelope integrity and membrane homeostasis. This is Inner membrane-spanning protein YciB from Polynucleobacter asymbioticus (strain DSM 18221 / CIP 109841 / QLW-P1DMWA-1) (Polynucleobacter necessarius subsp. asymbioticus).